The primary structure comprises 391 residues: Phosphoprotein (391 aa).

Residues T10 and T16 each carry the phosphothreonine modification. The segment covering 54–65 (QKNIQHPTASHQ) has biased composition (polar residues). 2 disordered regions span residues 54-98 (QKNI…EPLF) and 148-184 (PVTE…KERS). At S69 the chain carries Phosphoserine. Residues T91, T150, and T165 each carry the phosphothreonine modification. S188 is subject to Phosphoserine. Positions 216-279 (ISANEIMDLL…MATVKIMDPG (64 aa)) are multimerization. Positions 218-245 (ANEIMDLLRGMDARLQHLEQKVDKVLAQ) form a coiled coil. A Phosphothreonine modification is found at T250. Position 257 is a phosphoserine (S257). T258 and T282 each carry phosphothreonine. Residues S292 and S294 each carry the phosphoserine modification. T298 carries the post-translational modification Phosphothreonine. Phosphoserine is present on residues S301 and S374. The interaction with the nucleoprotein stretch occupies residues 343 to 391 (AGRKVMITKMITDCVANPQMKQAFEQRLAKASTEDALNDIKRDIIRSAI). At T375 the chain carries Phosphothreonine.

It belongs to the rubulavirus/avulavirus P protein family. In terms of assembly, homotetramer. Interacts (via multimerization domain) with polymerase L; this interaction forms the polymerase L-P complex. Interacts (via N-terminus) with N0 (via Ncore); this interaction allows P to chaperon N0 to avoid N polymerization before encapsidation. Interacts (via C-terminus) with N-RNA template; this interaction positions the polymerase on the template for both transcription and replication. Interacts with host RPS6KB1 kinase; this interaction may play a role in the viral replication and transcription.

Essential cofactor of the RNA polymerase L that plays a central role in the transcription and replication by forming the polymerase complex with RNA polymerase L and recruiting L to the genomic N-RNA template for RNA synthesis. Also plays a central role in the encapsidation of nascent RNA chains by forming the encapsidation complex with the nucleocapsid protein N (N-P complex). Acts as a chaperone for newly synthesized free N protein, so-called N0, allowing encapsidation of nascent RNA chains during replication. The nucleoprotein protein N prevents excessive phosphorylation of P, which leads to down-regulation of viral transcription/ replication. Participates, together with N, in the formation of viral factories (viroplasms), which are large inclusions in the host cytoplasm where replication takes place. The chain is Phosphoprotein from Mumps virus (strain Enders) (MuV).